The chain runs to 185 residues: uncharacterized protein (185 aa).

Positions Met-1–Phe-24 are cleaved as a signal peptide. A helical transmembrane segment spans residues Val-50 to Leu-70. Residues Glu-96–Thr-113 show a composition bias toward basic and acidic residues. A disordered region spans residues Glu-96–Pro-185. Residues Val-114–Gln-126 show a composition bias toward polar residues. A compositionally biased stretch (basic and acidic residues) spans Arg-127–Glu-138. Over residues Pro-139–Ser-155 the composition is skewed to pro residues.

It localises to the host membrane. This is an uncharacterized protein from Colorado tick fever virus (strain USA/Florio N-7180) (CTFV).